Consider the following 444-residue polypeptide: ATP-dependent RNA helicase SrmB (444 aa).

The Q motif signature appears at 4–32 (TTFSELELDESLLEALQDKGFTRPTAIQA). The region spanning 35 to 209 (IPPALDGRDV…AERLLEDPVE (175 aa)) is the Helicase ATP-binding domain. 48–55 (APTGTGKT) is an ATP binding site. Positions 157–160 (DEAD) match the DEAD box motif. One can recognise a Helicase C-terminal domain in the interval 238–387 (LLVHLLKQPE…ELRPKTRAPS (150 aa)). The segment covering 382 to 391 (KTRAPSEKQT) has biased composition (basic and acidic residues). A disordered region spans residues 382-444 (KTRAPSEKQT…TGVPPQTTEE (63 aa)). 2 stretches are compositionally biased toward basic residues: residues 394 to 406 (PSKKVLAKRAEKK) and 414 to 432 (PRVKKRHRDTKNIGKRRKP).

It belongs to the DEAD box helicase family. SrmB subfamily. Interacts with the 50S ribosomal subunit. Forms a complex with the 50S ribosomal proteins L4 and L24, and a region near the 5'-end of 23S rRNA.

It localises to the cytoplasm. The enzyme catalyses ATP + H2O = ADP + phosphate + H(+). Its function is as follows. DEAD-box RNA helicase involved in the assembly of the 50S ribosomal subunit at low temperature. Exhibits RNA-stimulated ATP hydrolysis and RNA unwinding activity. Acts before DeaD. The sequence is that of ATP-dependent RNA helicase SrmB from Escherichia coli (strain K12).